We begin with the raw amino-acid sequence, 430 residues long: Probable dual-specificity RNA methyltransferase RlmN (430 aa).

E125 (proton acceptor) is an active-site residue. Residues 152-395 enclose the Radical SAM core domain; the sequence is RHGRVTLCVS…VTVRDTRGRE (244 aa). Cysteines 159 and 400 form a disulfide. C166, C170, and C173 together coordinate [4Fe-4S] cluster. Residues 221-222, S255, 278-280, and N357 each bind S-adenosyl-L-methionine; these read GE and SLH. C400 serves as the catalytic S-methylcysteine intermediate.

Belongs to the radical SAM superfamily. RlmN family. Requires [4Fe-4S] cluster as cofactor.

The protein localises to the cytoplasm. It catalyses the reaction adenosine(2503) in 23S rRNA + 2 reduced [2Fe-2S]-[ferredoxin] + 2 S-adenosyl-L-methionine = 2-methyladenosine(2503) in 23S rRNA + 5'-deoxyadenosine + L-methionine + 2 oxidized [2Fe-2S]-[ferredoxin] + S-adenosyl-L-homocysteine. The enzyme catalyses adenosine(37) in tRNA + 2 reduced [2Fe-2S]-[ferredoxin] + 2 S-adenosyl-L-methionine = 2-methyladenosine(37) in tRNA + 5'-deoxyadenosine + L-methionine + 2 oxidized [2Fe-2S]-[ferredoxin] + S-adenosyl-L-homocysteine. In terms of biological role, specifically methylates position 2 of adenine 2503 in 23S rRNA and position 2 of adenine 37 in tRNAs. The sequence is that of Probable dual-specificity RNA methyltransferase RlmN from Acidothermus cellulolyticus (strain ATCC 43068 / DSM 8971 / 11B).